The sequence spans 170 residues: MPKTRRQRTRRARRNRPPTPWPISQDLDRASYMDTPSTCLAIVYRPIGVPSQVVYVPPAYIDMPSWPPVQSTNSPGTPSMDALSALLSNTLSLASPPSPPREPQGPSRSLPLPPLLSPPRFHLPSFNQCESTPPTEMDAWNQPSGISSPPSPSPNLASVPKTSTPPGEKP.

Residues 1–16 are compositionally biased toward basic residues; that stretch reads MPKTRRQRTRRARRNR. Disordered regions lie at residues 1-27 and 69-170; these read MPKT…SQDL and VQST…GEKP. The Nuclear localization signal, and RNA-binding (RxRE) signature appears at 2–19; it reads PKTRRQRTRRARRNRPPT. Residues 57–71 form a homomultimerization region; it reads PPAYIDMPSWPPVQS. Residues 82–95 show a composition bias toward low complexity; sequence ALSALLSNTLSLAS. The Nuclear export signal motif lies at 83-94; the sequence is LSALLSNTLSLA. Residues 124–132 are homomultimerization; sequence PSFNQCEST. Residues 143–160 show a composition bias toward low complexity; the sequence is PSGISSPPSPSPNLASVP. Residues Ser-151 and Ser-153 each carry the phosphoserine; by host modification. A compositionally biased stretch (polar residues) spans 161–170; sequence KTSTPPGEKP.

This sequence belongs to the deltaretrovirus Rex protein family. In terms of assembly, homomultimer. Phosphorylation is essential for RNA-binding and function.

The protein localises to the host nucleus. The protein resides in the host nucleolus. Its subcellular location is the host cytoplasm. Functionally, rex escorts unspliced gag-pro-pol and singly spliced env mRNAs out of the nucleus of infected cells. These mRNAs carry a recognition sequence called Rex responsive element (RxRE or XRE) located at the 3' region of the long terminal repeat (LTR). This function is essential since most HTLV proteins are translated from unspliced or partially spliced pre-mRNAs that cannot exit the nucleus by the pathway used by fully processed cellular mRNAs. This Human T-cell leukemia virus 2 (HTLV-2) protein is Protein Rex.